The chain runs to 370 residues: Protein Wnt-1 (370 aa).

Residues 1–19 form the signal peptide; sequence MRVLALLLAVKAACVLLVS. A glycan (N-linked (GlcNAc...) asparagine) is linked at asparagine 28. Cystine bridges form between cysteine 92–cysteine 103, cysteine 142–cysteine 150, cysteine 152–cysteine 169, cysteine 217–cysteine 231, and cysteine 219–cysteine 226. Residue serine 223 is the site of O-palmitoleoyl serine; by PORCN attachment. Positions 261–282 are disordered; that stretch reads GSNRASHRADPRHLEPENPAHK. Basic and acidic residues predominate over residues 267 to 280; that stretch reads HRADPRHLEPENPA. 6 disulfide bridges follow: cysteine 299-cysteine 330, cysteine 315-cysteine 325, cysteine 329-cysteine 369, cysteine 345-cysteine 360, cysteine 347-cysteine 357, and cysteine 352-cysteine 353. A glycan (N-linked (GlcNAc...) asparagine) is linked at asparagine 316. Residue asparagine 359 is glycosylated (N-linked (GlcNAc...) asparagine).

It belongs to the Wnt family. Post-translationally, palmitoleoylation is required for efficient binding to frizzled receptors. Palmitoleoylation is necessary for proper trafficking to cell surface. Depalmitoleoylated by NOTUM, leading to inhibit Wnt signaling pathway.

It is found in the secreted. The protein resides in the extracellular space. It localises to the extracellular matrix. Its function is as follows. Ligand for members of the frizzled family of seven transmembrane receptors. Acts in the canonical Wnt signaling pathway by promoting beta-catenin-dependent transcriptional activation. Involved in neurogenesis. Performs a partially redundant function with wnt10b in the formation of the midbrain-hindbrain boundary (MHB) organizer. In the hindbrain, mediates lateral inhibition of boundary cell specification, probably via up-regulation of proneural and Delta gene expression in non-boundary cells; localized expression of wnt1 in boundary cells is maintained via rfng-mediated modulation of Notch activity. In Danio rerio (Zebrafish), this protein is Protein Wnt-1 (wnt1).